Reading from the N-terminus, the 137-residue chain is Nucleoside diphosphate kinase (137 aa).

K9, F57, R85, T91, R102, and N112 together coordinate ATP. Catalysis depends on H115, which acts as the Pros-phosphohistidine intermediate.

Belongs to the NDK family. As to quaternary structure, homotetramer. It depends on Mg(2+) as a cofactor.

It localises to the cytoplasm. The enzyme catalyses a 2'-deoxyribonucleoside 5'-diphosphate + ATP = a 2'-deoxyribonucleoside 5'-triphosphate + ADP. It catalyses the reaction a ribonucleoside 5'-diphosphate + ATP = a ribonucleoside 5'-triphosphate + ADP. Its function is as follows. Major role in the synthesis of nucleoside triphosphates other than ATP. The ATP gamma phosphate is transferred to the NDP beta phosphate via a ping-pong mechanism, using a phosphorylated active-site intermediate. This Citrifermentans bemidjiense (strain ATCC BAA-1014 / DSM 16622 / JCM 12645 / Bem) (Geobacter bemidjiensis) protein is Nucleoside diphosphate kinase.